Here is a 250-residue protein sequence, read N- to C-terminus: DNA repair protein RecO (250 aa).

This sequence belongs to the RecO family.

Functionally, involved in DNA repair and RecF pathway recombination. In Syntrophobacter fumaroxidans (strain DSM 10017 / MPOB), this protein is DNA repair protein RecO.